The following is a 617-amino-acid chain: Protein AsmA (617 aa).

Residues 1 to 3 (MRR) lie on the Cytoplasmic side of the membrane. Residues 4-24 (FLTTLMILLVVLVAGLSALVL) traverse the membrane as a helical segment. Residues 25–617 (LVNPNDFRDY…KDVKKLLEKM (593 aa)) lie on the Periplasmic side of the membrane. The span at 302–319 (TANGENGAAQQGQSQSTL) shows a compositional bias: polar residues. The tract at residues 302–321 (TANGENGAAQQGQSQSTLPR) is disordered.

The protein belongs to the AsmA family.

Its subcellular location is the cell inner membrane. Functionally, could be involved in the assembly of outer membrane proteins. May indirectly influence the assembly of outer membrane proteins, potentially by altering outer membrane fluidity. Inhibits the assembly of mutant forms of outer membrane protein F (OmpF). This chain is Protein AsmA, found in Escherichia coli (strain K12).